A 298-amino-acid polypeptide reads, in one-letter code: Glutamyl-Q tRNA(Asp) synthetase (298 aa).

Residues 9–13 and glutamate 45 each bind L-glutamate; that span reads RFAPS. A 'HIGH' region motif is present at residues 12-22; that stretch reads PSPTGLLHAGS. Zn(2+) is bound by residues cysteine 101, cysteine 103, tyrosine 121, and cysteine 125. L-glutamate-binding residues include tyrosine 179 and arginine 197. Positions 235–239 match the 'KMSKS' region motif; the sequence is KLSKQ. Lysine 238 lines the ATP pocket.

It belongs to the class-I aminoacyl-tRNA synthetase family. GluQ subfamily. Requires Zn(2+) as cofactor.

Its function is as follows. Catalyzes the tRNA-independent activation of glutamate in presence of ATP and the subsequent transfer of glutamate onto a tRNA(Asp). Glutamate is transferred on the 2-amino-5-(4,5-dihydroxy-2-cyclopenten-1-yl) moiety of the queuosine in the wobble position of the QUC anticodon. This is Glutamyl-Q tRNA(Asp) synthetase from Chromobacterium violaceum (strain ATCC 12472 / DSM 30191 / JCM 1249 / CCUG 213 / NBRC 12614 / NCIMB 9131 / NCTC 9757 / MK).